Here is a 161-residue protein sequence, read N- to C-terminus: 2-C-methyl-D-erythritol 2,4-cyclodiphosphate synthase (161 aa).

2 residues coordinate a divalent metal cation: Asp11 and His13. Residues 11–13 and 37–38 contribute to the 4-CDP-2-C-methyl-D-erythritol 2-phosphate site; these read DIH and HS. His45 is an a divalent metal cation binding site. 4-CDP-2-C-methyl-D-erythritol 2-phosphate-binding positions include 59–61, 135–138, and Arg145; these read DIG and TTNE.

It belongs to the IspF family. In terms of assembly, homotrimer. A divalent metal cation serves as cofactor.

The enzyme catalyses 4-CDP-2-C-methyl-D-erythritol 2-phosphate = 2-C-methyl-D-erythritol 2,4-cyclic diphosphate + CMP. The protein operates within isoprenoid biosynthesis; isopentenyl diphosphate biosynthesis via DXP pathway; isopentenyl diphosphate from 1-deoxy-D-xylulose 5-phosphate: step 4/6. Functionally, involved in the biosynthesis of isopentenyl diphosphate (IPP) and dimethylallyl diphosphate (DMAPP), two major building blocks of isoprenoid compounds. Catalyzes the conversion of 4-diphosphocytidyl-2-C-methyl-D-erythritol 2-phosphate (CDP-ME2P) to 2-C-methyl-D-erythritol 2,4-cyclodiphosphate (ME-CPP) with a corresponding release of cytidine 5-monophosphate (CMP). This chain is 2-C-methyl-D-erythritol 2,4-cyclodiphosphate synthase, found in Thermosynechococcus vestitus (strain NIES-2133 / IAM M-273 / BP-1).